Consider the following 163-residue polypeptide: UPF0303 protein SAV_5210 (163 aa).

It belongs to the UPF0303 family.

The polypeptide is UPF0303 protein SAV_5210 (Streptomyces avermitilis (strain ATCC 31267 / DSM 46492 / JCM 5070 / NBRC 14893 / NCIMB 12804 / NRRL 8165 / MA-4680)).